The following is a 289-amino-acid chain: Digeranylgeranylglyceryl phosphate synthase (289 aa).

A run of 8 helical transmembrane segments spans residues C17–S37, L50–I70, F106–F126, T141–A161, V163–I183, L221–L241, Y243–A263, and K269–V289.

Belongs to the UbiA prenyltransferase family. DGGGP synthase subfamily. Mg(2+) serves as cofactor.

It is found in the cell membrane. The enzyme catalyses sn-3-O-(geranylgeranyl)glycerol 1-phosphate + (2E,6E,10E)-geranylgeranyl diphosphate = 2,3-bis-O-(geranylgeranyl)-sn-glycerol 1-phosphate + diphosphate. It functions in the pathway membrane lipid metabolism; glycerophospholipid metabolism. Functionally, prenyltransferase that catalyzes the transfer of the geranylgeranyl moiety of geranylgeranyl diphosphate (GGPP) to the C2 hydroxyl of (S)-3-O-geranylgeranylglyceryl phosphate (GGGP). This reaction is the second ether-bond-formation step in the biosynthesis of archaeal membrane lipids. This chain is Digeranylgeranylglyceryl phosphate synthase, found in Methanosarcina barkeri (strain Fusaro / DSM 804).